A 149-amino-acid chain; its full sequence is Large ribosomal subunit protein bL20m (149 aa).

Residues 1–9 (MVFLTAQLW) constitute a mitochondrion transit peptide.

This sequence belongs to the bacterial ribosomal protein bL20 family. In terms of assembly, component of the mitochondrial large ribosomal subunit (mt-LSU). Mature mammalian 55S mitochondrial ribosomes consist of a small (28S) and a large (39S) subunit. The 28S small subunit contains a 12S ribosomal RNA (12S mt-rRNA) and 30 different proteins. The 39S large subunit contains a 16S rRNA (16S mt-rRNA), a copy of mitochondrial valine transfer RNA (mt-tRNA(Val)), which plays an integral structural role, and 52 different proteins. Interacts with OXA1L.

The protein localises to the mitochondrion. This is Large ribosomal subunit protein bL20m (MRPL20) from Homo sapiens (Human).